The primary structure comprises 808 residues: Ribosome biogenesis protein BOP1 homolog (808 aa).

The interval 1–56 is disordered; the sequence is MTSPKGKPSPKRSAPAPTTAALTPRTEERTEGATSSASASASSHISSSFDSPRDDT. 2 stretches are compositionally biased toward low complexity: residues 12–24 and 33–50; these read RSAPAPTTAALTP and ATSSASASASSHISSSFD. 5 WD repeats span residues 430 to 469, 640 to 680, 682 to 720, 724 to 766, and 777 to 808; these read GHTATVRSVSVSPNGQYLATGCDDHLVRVFEVQTGRLMKR, KFSE…RRFK, SGGVTTCLSIHPEGDNFLVGDTTSHTSWFDMDFSDKPYK, SHRG…DYNK, and KHQRPVYAVAWHPTLAWLFTSTEDGVVTAWTE.

It belongs to the WD repeat BOP1/ERB1 family.

It localises to the nucleus. It is found in the nucleolus. Its subcellular location is the nucleoplasm. Required for maturation of ribosomal RNAs and formation of the large ribosomal subunit. This chain is Ribosome biogenesis protein BOP1 homolog, found in Leishmania infantum.